The following is a 515-amino-acid chain: Maturase K (515 aa).

It belongs to the intron maturase 2 family. MatK subfamily.

It is found in the plastid. The protein resides in the chloroplast. Usually encoded in the trnK tRNA gene intron. Probably assists in splicing its own and other chloroplast group II introns. This is Maturase K from Pinus clausa (Sand pine).